The sequence spans 85 residues: Contulakin-Lt1 (85 aa).

The first 22 residues, 1-22, serve as a signal peptide directing secretion; that stretch reads MRTAYWVMVMMMVGITAPLSEG. A propeptide spanning residues 23 to 60 is cleaved from the precursor; sequence RKLNDAIRGLVADYLTPQLLQSLVSAPYPEFQLDDPNL. A disulfide bond links Cys-65 and Cys-70. Positions 76-85 are excised as a propeptide; it reads RRRDLKKRNK.

This sequence belongs to the conotoxin C superfamily. Expressed by the venom duct.

Its subcellular location is the secreted. Acts as an agonist of neurotensin receptors. It binds to human neurotensin type 1 receptor (NTSR1), rat neurotensin types 1 and 2 receptors (NTSR1/NTSR2) and mouse neurotensin type 3 receptor (SORT1). This chain is Contulakin-Lt1, found in Conus litteratus (Lettered cone).